The following is a 31-amino-acid chain: Photosystem I reaction center subunit XII (31 aa).

The helical transmembrane segment at 7–26 threads the bilayer; that stretch reads QIFIALLTALIPAFFALKLG.

Belongs to the PsaM family.

The protein localises to the plastid. The protein resides in the chloroplast thylakoid membrane. In Euglena granulata, this protein is Photosystem I reaction center subunit XII.